A 288-amino-acid chain; its full sequence is RanBP2-type zinc finger protein At1g67325 (288 aa).

The segment covering 1–11 (MSQVDNRNSSA) has biased composition (polar residues). Disordered regions lie at residues 1 to 24 (MSQV…RRED), 52 to 77 (PADH…GAYL), 176 to 198 (MPRP…DNDW), 222 to 248 (PKPG…WKCD), and 265 to 288 (NCGA…ENDQ). The segment covering 15–24 (ARTDGGRRED) has biased composition (basic and acidic residues). 3 consecutive RanBP2-type zinc fingers follow at residues 22-53 (REDD…PRPA), 194-225 (RDND…PKPG), and 241-272 (PEGS…DKPG). The span at 181-197 (FYPDEKSQKRDSTRDND) shows a compositional bias: basic and acidic residues. Polar residues predominate over residues 223-241 (KPGSQQGGSSDKISKQNAP). Serine 278 is modified (phosphoserine).

The sequence is that of RanBP2-type zinc finger protein At1g67325 from Arabidopsis thaliana (Mouse-ear cress).